Consider the following 590-residue polypeptide: Transcription factor bHLH13 (590 aa).

Disordered regions lie at residues 274-296 (LQHH…HRQF) and 385-439 (AASS…EAER). Over residues 281–293 (QQQQQQPPQQQQH) the composition is skewed to low complexity. Residues 416–425 (RPRKRGRRPA) are compositionally biased toward basic residues. Positions 429–478 (AEALNHVEAERQRREKLNQRFYALRSVVPNISKMDKASLLGDAVSYINEL) constitute a bHLH domain.

Homodimer.

Its subcellular location is the nucleus. In Arabidopsis thaliana (Mouse-ear cress), this protein is Transcription factor bHLH13 (BHLH13).